The chain runs to 1187 residues: ATP-dependent DNA helicase MPH1 (1187 aa).

In terms of domain architecture, Helicase ATP-binding spans 144–311; sequence IVERAFYDNL…QIIDNLNISK (168 aa). 157 to 164 serves as a coordination point for ATP; sequence LPTGLGKT. Positions 259–262 match the DEAH box motif; sequence DEAH. The 196-residue stretch at 486–681 folds into the Helicase C-terminal domain; the sequence is ELDDFFKNHE…FIQLRPQHRM (196 aa). Disordered stretches follow at residues 542–576, 781–848, and 941–1003; these read VENFGKKKQKGQTKKKKDERPSTRSSSENAQMTGM, DKLV…NNQV, and PEKP…LGVK. Positions 547–556 are enriched in basic residues; sequence KKKQKGQTKK. A compositionally biased stretch (polar residues) spans 564–576; sequence TRSSSENAQMTGM. Over residues 781 to 817 the composition is skewed to basic and acidic residues; that stretch reads DKLVDSDSESEVDKENENVIQEVDKSKNQEQNDHIIT. Residues 822–848 show a composition bias toward polar residues; it reads TEQSVAGNTKSTTNGTSYSEPENNNQV. Residues 967-977 are compositionally biased toward low complexity; it reads SNSISIPSSTT. Residues 980-989 are compositionally biased toward basic and acidic residues; the sequence is SHNEVTRKVV.

This sequence belongs to the DEAD box helicase family. DEAH subfamily. FANCM sub-subfamily. In terms of assembly, interacts with the MHF histone-fold complex to form the FANCM-MHF complex.

It localises to the nucleus. It catalyses the reaction ATP + H2O = ADP + phosphate + H(+). Functionally, ATP-dependent DNA helicase involved in DNA damage repair by homologous recombination and in genome maintenance. Capable of unwinding D-loops. Plays a role in limiting crossover recombinants during mitotic DNA double-strand break (DSB) repair. Component of a FANCM-MHF complex which promotes gene conversion at blocked replication forks, probably by reversal of the stalled fork. The protein is ATP-dependent DNA helicase MPH1 of Candida albicans (strain SC5314 / ATCC MYA-2876) (Yeast).